Consider the following 448-residue polypeptide: MSQSTATYINVIGAGLAGSEAAYQIAKRGIPVKLYEMRGVKATPQHKTTNFAELVCSNSFRGDSLTNAVGLLKEEMRRLDSIIMRNGEANRVPAGGAMAVDREGYAESVTAELENHPLIEVIRDEITEIPDDAITVIATGPLTSDALAEKIHALNGGDGFYFYDAAAPIIDKSTIDMSKVYLKSRYDKGEAAYLNCPMTKEEFMAFHDALTTAEEAPLNAFEKEKYFEGCMPIEVMAKRGIKTMLYGPMKPVGLEYPDDYTGPRDGEFKTPYAVVQLRQDNAAGSLYNIVGFQTHLKWGEQKRVFQMIPGLENAEFVRYGVMHRNSYMDSPNLLTETFQSRSNPNLFFAGQMTGVEGYVESAASGLVAGINAARLFKREEALIFPQTTAIGSLPHYVTHADSKHFQPMNVNFGIIKELEGPRIRDKKERYAAIASRALADLDTCLASL.

13–18 (GAGLAG) is an FAD binding site.

It belongs to the MnmG family. TrmFO subfamily. Requires FAD as cofactor.

It localises to the cytoplasm. It catalyses the reaction uridine(54) in tRNA + (6R)-5,10-methylene-5,6,7,8-tetrahydrofolate + NADH + H(+) = 5-methyluridine(54) in tRNA + (6S)-5,6,7,8-tetrahydrofolate + NAD(+). It carries out the reaction uridine(54) in tRNA + (6R)-5,10-methylene-5,6,7,8-tetrahydrofolate + NADPH + H(+) = 5-methyluridine(54) in tRNA + (6S)-5,6,7,8-tetrahydrofolate + NADP(+). Its function is as follows. Catalyzes the folate-dependent formation of 5-methyl-uridine at position 54 (M-5-U54) in all tRNAs. In Streptococcus pyogenes serotype M4 (strain MGAS10750), this protein is Methylenetetrahydrofolate--tRNA-(uracil-5-)-methyltransferase TrmFO.